Consider the following 147-residue polypeptide: Large ribosomal subunit protein bL9 (147 aa).

This sequence belongs to the bacterial ribosomal protein bL9 family.

Binds to the 23S rRNA. The polypeptide is Large ribosomal subunit protein bL9 (Natranaerobius thermophilus (strain ATCC BAA-1301 / DSM 18059 / JW/NM-WN-LF)).